A 228-amino-acid chain; its full sequence is ATP synthase subunit beta, mitochondrial (228 aa).

Residues 1–31 (MFALRAAAKADKNLLPFLGQLSRSHAAKAAK) constitute a mitochondrion transit peptide. 183 to 190 (GGAGVGKT) contacts ATP.

Belongs to the ATPase alpha/beta chains family. As to quaternary structure, F-type ATPases have 2 components, CF(1) - the catalytic core - and CF(0) - the membrane proton channel. CF(1) has five subunits: alpha(3), beta(3), gamma(1), delta(1), epsilon(1). CF(0) has three main subunits: a, b and c.

The protein resides in the mitochondrion. Its subcellular location is the mitochondrion inner membrane. It carries out the reaction ATP + H2O + 4 H(+)(in) = ADP + phosphate + 5 H(+)(out). In terms of biological role, mitochondrial membrane ATP synthase (F(1)F(0) ATP synthase or Complex V) produces ATP from ADP in the presence of a proton gradient across the membrane which is generated by electron transport complexes of the respiratory chain. F-type ATPases consist of two structural domains, F(1) - containing the extramembraneous catalytic core, and F(0) - containing the membrane proton channel, linked together by a central stalk and a peripheral stalk. During catalysis, ATP synthesis in the catalytic domain of F(1) is coupled via a rotary mechanism of the central stalk subunits to proton translocation. Subunits alpha and beta form the catalytic core in F(1). Rotation of the central stalk against the surrounding alpha(3)beta(3) subunits leads to hydrolysis of ATP in three separate catalytic sites on the beta subunits. In Drosophila virilis (Fruit fly), this protein is ATP synthase subunit beta, mitochondrial.